We begin with the raw amino-acid sequence, 427 residues long: MTEAMKITLSTQPADARWGEKATYSINNDGITLHLNGADDLGLIQRAARKIDGLGIKHVQLSGEGWDADRCWAFWQGYKAPKGTRKVEWPDLDDAQRQELDNRLMIIDWVRDTINAPAEELGPSQLAQRAVDLISNVASDRVTYRITKGEDLREQGYMGLHTVGRGSERSPVLLALDYNPTGDKEAPVYACLVGKGITFDSGGYSIKQTAFMDSMKSDMGGAATVTGALAFAITRGLNKRVKLFLCCADNLISGNAFKLGDIITYRNGKKVEVMNTDAEGRLVLADGLIDASAQKPEMIIDAATLTGAAKTALGNDYHALFSFDDALAGRLLASASQENEPFWRLPLAEFHRSQLPSNFAELNNTGSAAYPAGASTAAGFLSHFVENYQQGWLHIDCSATYRKAPVEQWSAGATGLGVRTIANLLTA.

Mn(2+) contacts are provided by lysine 195 and aspartate 200. Lysine 207 is an active-site residue. Mn(2+)-binding residues include aspartate 218, aspartate 277, and glutamate 279. Arginine 281 is a catalytic residue.

Belongs to the peptidase M17 family. As to quaternary structure, homohexamer. Mn(2+) is required as a cofactor.

It is found in the cytoplasm. It catalyses the reaction Release of an N-terminal amino acid, Xaa, from a peptide or arylamide. Xaa is preferably Glu or Asp but may be other amino acids, including Leu, Met, His, Cys and Gln.. Functionally, probably plays an important role in intracellular peptide degradation. The chain is Peptidase B from Escherichia coli O157:H7.